A 58-amino-acid chain; its full sequence is Ribulose bisphosphate carboxylase large chain (58 aa).

Positions 1–2 (MS) are excised as a propeptide. P3 carries the post-translational modification N-acetylproline. N6,N6,N6-trimethyllysine is present on K14.

The protein belongs to the RuBisCO large chain family. Type I subfamily. As to quaternary structure, heterohexadecamer of 8 large chains and 8 small chains.

The protein localises to the plastid. The protein resides in the chloroplast. The catalysed reaction is 2 (2R)-3-phosphoglycerate + 2 H(+) = D-ribulose 1,5-bisphosphate + CO2 + H2O. The enzyme catalyses D-ribulose 1,5-bisphosphate + O2 = 2-phosphoglycolate + (2R)-3-phosphoglycerate + 2 H(+). Functionally, ruBisCO catalyzes two reactions: the carboxylation of D-ribulose 1,5-bisphosphate, the primary event in carbon dioxide fixation, as well as the oxidative fragmentation of the pentose substrate in the photorespiration process. Both reactions occur simultaneously and in competition at the same active site. In Rosa damascena (Damask rose), this protein is Ribulose bisphosphate carboxylase large chain (rbcL).